The following is a 249-amino-acid chain: tRNA (guanine-N(1)-)-methyltransferase (249 aa).

S-adenosyl-L-methionine is bound by residues Gly113 and 133 to 138 (IGDFVV).

The protein belongs to the RNA methyltransferase TrmD family. Homodimer.

The protein localises to the cytoplasm. The catalysed reaction is guanosine(37) in tRNA + S-adenosyl-L-methionine = N(1)-methylguanosine(37) in tRNA + S-adenosyl-L-homocysteine + H(+). Its function is as follows. Specifically methylates guanosine-37 in various tRNAs. The polypeptide is tRNA (guanine-N(1)-)-methyltransferase (Neisseria gonorrhoeae (strain ATCC 700825 / FA 1090)).